Here is a 696-residue protein sequence, read N- to C-terminus: SLIT and NTRK-like protein 1 (696 aa).

The signal sequence occupies residues 1–17 (MLLWILLLETSLCFAAG). An LRRNT 1 domain is found at 18–57 (NVTGDVCKEKICSCNEIEGDLHVDCEKKGFTSLQRFTAPT). The Extracellular portion of the chain corresponds to 18-622 (NVTGDVCKEK…SRVSISVLVP (605 aa)). LRR repeat units follow at residues 59–80 (QFYHLFLHGNSLTRLFPNEFAN), 83–104 (NAVSLHMENNGLHEIVPGAFLG), 106–128 (QLVKRLHINNNKIKSFRKQTFLG), 131–152 (DLEYLQADFNLLRDIDPGAFQD), 155–176 (KLEVLILNDNLISTLPANVFQY), and 178–199 (PITHLDLRGNRLKTLPYEEVLE). In terms of domain architecture, LRRCT 1 spans 212–263 (NPWDCTCDLLSLKEWLENIPKNALIGRVVCEAPTRLQGKDLNETTEQDLCPL). The disordered stretch occupies residues 265–314 (NRVDSSLPAPPAQEETFAPGPLPTPFKTNGQEDHATPGSAPNGGTKIPGN). The LRRNT 2 domain occupies 332–373 (NKPLANSLPCPGGCSCDHIPGSGLKMNCNNRNVSSLADLKPK). LRR repeat units follow at residues 376 to 397 (NVQELFLRDNKIHSIRKSHFVD), 400 to 421 (NLILLDLGNNNIATVENNTFKN), 424 to 445 (DLRWLYMDSNYLDTLSREKFAG), 448 to 469 (NLEYLNVEYNAIQLILPGTFNA), 472 to 493 (KLRILILNNNLLRSLPVDVFAG), and 495 to 516 (SLSKLSLHNNYFMYLPVAGVLD). One can recognise an LRRCT 2 domain in the interval 529-580 (NPWECSCTIVPFKQWAERLGSEVLMSDLKCETPVNFFRKDFMLLSNDEICPQ). The helical transmembrane segment at 623-643 (GLLLVFVTSAFTVVGMLVFIL) threads the bilayer. The Cytoplasmic portion of the chain corresponds to 644-696 (RNRKRSKRRDANSSASEINSLQTVCDSSYWHNGPYNADGAHRVYDCGSHSLSD). At S695 the chain carries Phosphoserine; by CK2.

This sequence belongs to the SLITRK family. Can form homodimers; homodimerization requires repeat LRR 2. Interacts with YWHAB, YWHAE, YWHAG, YWHAH, SFN, YWHAQ and YWHAZ. Undergoes proteolytic cleavage that results in shedding of the ectodomain and cleavage of the C-terminal cytoplasmic tail. Glycosylated. Phosphorylation at Ser-695 is necessary for proper function in promoting neurite outgrowth. In terms of tissue distribution, expressed predominantly in the frontal lobe of the cerebral cortex of the brain. Also expressed in some astrocytic brain tumors such as astrocytomas, oligodendrogliomas, glioblastomas, gangliogliomas and primitive neuroectodermal tumors.

The protein localises to the membrane. Its subcellular location is the secreted. The protein resides in the synapse. Functionally, it is involved in synaptogenesis and promotes excitatory synapse differentiation. Enhances neuronal dendrite outgrowth. In Homo sapiens (Human), this protein is SLIT and NTRK-like protein 1 (SLITRK1).